We begin with the raw amino-acid sequence, 203 residues long: Bone marrow stromal antigen 2 (203 aa).

Topologically, residues 1 to 26 (MAPTFYHYHPLPMDQKEPGCGIRWRC) are cytoplasmic. A helical; Signal-anchor for type II membrane protein membrane pass occupies residues 27–47 (LAAASVLILVALVIPLIIFAV). Over 48-183 (KANSEACRDG…EASITSKQNS (136 aa)) the chain is Extracellular. Asparagine 66 and asparagine 93 each carry an N-linked (GlcNAc...) asparagine glycan. Residues 66–178 (NTTRLLQRQL…LRTAEEASIT (113 aa)) adopt a coiled-coil conformation. The GPI-anchor amidated serine moiety is linked to residue serine 183. Residues 184–203 (AGSMAVSSLLVLAVPLFLLF) constitute a propeptide, removed in mature form.

As to quaternary structure, parallel homodimer; disulfide-linked. May form homotetramers under reducing conditions. Isoform 1 and isoform 2 form homodimers and also heterodimers with each other. Dimerization is essential for its antiviral activity. Interacts (via cytoplasmic domain) with ARHGAP44. Interacts with MMP14 (via C-terminal cytoplasmic tail). Interacts with LILRA4/ILT7. Interacts with RNF115. Post-translationally, the GPI anchor is essential for its antiviral activity.

The protein localises to the golgi apparatus. It is found in the trans-Golgi network. The protein resides in the cell membrane. It localises to the late endosome. Its subcellular location is the membrane raft. The protein localises to the cytoplasm. It is found in the apical cell membrane. Its function is as follows. IFN-induced antiviral host restriction factor which efficiently blocks the release of diverse mammalian enveloped viruses by directly tethering nascent virions to the membranes of infected cells. Acts as a direct physical tether, holding virions to the cell membrane and linking virions to each other. The tethered virions can be internalized by endocytosis and subsequently degraded or they can remain on the cell surface. In either case, their spread as cell-free virions is restricted. Its target viruses belong to diverse families, including retroviridae: human immunodeficiency virus type 1 (HIV-1), mouse mammary tumor virus (MMTV) and murine leukemia virus (MLV), filoviridae: ebola virus (EBOV), arenaviridae: lassa virus (LASV), and rhabdoviridae: vesicular stomatitis virus (VSV). Can inhibit cell surface proteolytic activity of MMP14 causing decreased activation of MMP15 which results in inhibition of cell growth and migration. Can stimulate signaling by LILRA4/ILT7 and consequently provide negative feedback to the production of IFN by plasmacytoid dendritic cells in response to viral infection. Plays a role in the organization of the subapical actin cytoskeleton in polarized epithelial cells. The protein is Bone marrow stromal antigen 2 (Bst2) of Cricetulus griseus (Chinese hamster).